Here is a 72-residue protein sequence, read N- to C-terminus: Translational regulator CsrA (72 aa).

Belongs to the CsrA/RsmA family. In terms of assembly, homodimer; the beta-strands of each monomer intercalate to form a hydrophobic core, while the alpha-helices form wings that extend away from the core.

The protein resides in the cytoplasm. A translational regulator that binds mRNA to regulate translation initiation and/or mRNA stability. Usually binds in the 5'-UTR at or near the Shine-Dalgarno sequence preventing ribosome-binding, thus repressing translation. Its main target seems to be the major flagellin gene, while its function is anatagonized by FliW. The polypeptide is Translational regulator CsrA (Clostridium botulinum (strain 657 / Type Ba4)).